The following is a 423-amino-acid chain: Endoplasmic reticulum junction formation protein lunapark (423 aa).

At 1–45 the chain is on the cytoplasmic side; that stretch reads MGALLAKWRAKPSTVEVLEKMEKDIQSLEEFRDKNQKLRKIWVAR. The stretch at 16 to 40 forms a coiled coil; sequence EVLEKMEKDIQSLEEFRDKNQKLRK. A helical transmembrane segment spans residues 46-66; that stretch reads LFFYSTILYILTSLTVYLWYL. Over 67–77 the chain is Lumenal; sequence PDGMTARLLTM. A helical transmembrane segment spans residues 78 to 98; the sequence is LLFLSFPVLIWFVRTLLILWF. Residues 99–423 lie on the Cytoplasmic side of the membrane; the sequence is SRRTERNNDA…ETEESFMETE (325 aa). Residues 101–128 are a coiled coil; that stretch reads RTERNNDALELLKTEKKKILEEVMEKET. The tract at residues 147–169 is disordered; the sequence is KELELPVPGPPITPRPGQDLRQR. Thr159 carries the phosphothreonine modification. Residues Ser177, Ser179, and Ser188 each carry the phosphoserine modification. Phosphothreonine is present on Thr198. The tract at residues 200–247 is disordered; the sequence is SLQRDTSAPGGPPERSVQPTPQSNILQRRPGSPATTVSGMAIHPPGPP. A phosphoserine mark is found at Ser206 and Ser215. The span at 216 to 225 shows a compositional bias: polar residues; the sequence is VQPTPQSNIL. Thr219 carries the post-translational modification Phosphothreonine. Phosphoserine occurs at positions 222 and 231. The C4-type; plays a role in ER morphology zinc finger occupies 280 to 305; that stretch reads CQQCFSHNGMALKEEFEYVAFRCAYC. Residues 318–423 form a disordered region; the sequence is APRLQEINFD…ETEESFMETE (106 aa). Polar residues predominate over residues 334-343; that stretch reads DSQGSVSSVQ. Acidic residues-rich tracts occupy residues 370–391 and 414–423; these read QAIE…DDSE and ETEESFMETE.

Belongs to the lunapark family. In terms of assembly, homodimer; homodimerization requires the C4-type zinc finger motif and decreases during mitosis in a phosphorylation-dependent manner. Phosphorylated. Phosphorylation at Thr-159 occurs during interphase. Phosphorylation at Ser-177, Ser-179, Ser-188, Thr-198, Ser-206, Ser-215, Thr-219, Ser-222 and Ser-231 occurs during mitosis; these phosphorylations reduce both its homodimerization and the ER three-way tubular junction formation.

The protein resides in the endoplasmic reticulum membrane. Its function is as follows. Endoplasmic reticulum (ER)-shaping membrane protein that plays a role in determining ER morphology. Involved in the stabilization of nascent three-way ER tubular junctions within the ER network. May also play a role as a curvature-stabilizing protein within three-way ER tubular junction network. The protein is Endoplasmic reticulum junction formation protein lunapark (lnpk) of Xenopus tropicalis (Western clawed frog).